Here is a 358-residue protein sequence, read N- to C-terminus: Peptide chain release factor 1 (358 aa).

Gln-237 carries the post-translational modification N5-methylglutamine. Basic and acidic residues predominate over residues Glu-291–Arg-309. The tract at residues Glu-291–Tyr-313 is disordered.

It belongs to the prokaryotic/mitochondrial release factor family. In terms of processing, methylated by PrmC. Methylation increases the termination efficiency of RF1.

The protein localises to the cytoplasm. Its function is as follows. Peptide chain release factor 1 directs the termination of translation in response to the peptide chain termination codons UAG and UAA. The protein is Peptide chain release factor 1 of Mycoplasmopsis agalactiae (strain NCTC 10123 / CIP 59.7 / PG2) (Mycoplasma agalactiae).